A 97-amino-acid polypeptide reads, in one-letter code: Small ribosomal subunit protein bS20 (97 aa).

Belongs to the bacterial ribosomal protein bS20 family.

Its function is as follows. Binds directly to 16S ribosomal RNA. The protein is Small ribosomal subunit protein bS20 of Gloeothece citriformis (strain PCC 7424) (Cyanothece sp. (strain PCC 7424)).